The sequence spans 116 residues: Large ribosomal subunit protein uL18 (116 aa).

It belongs to the universal ribosomal protein uL18 family. In terms of assembly, part of the 50S ribosomal subunit; part of the 5S rRNA/L5/L18/L25 subcomplex. Contacts the 5S and 23S rRNAs.

Functionally, this is one of the proteins that bind and probably mediate the attachment of the 5S RNA into the large ribosomal subunit, where it forms part of the central protuberance. The polypeptide is Large ribosomal subunit protein uL18 (Saccharophagus degradans (strain 2-40 / ATCC 43961 / DSM 17024)).